Consider the following 71-residue polypeptide: MPAVKVKENEPFDVALRRFKRSCEKAGVLAEVRSREFYEKPTSERKRKAAAAVKRHAKKVQREQRRAVRLY.

A compositionally biased stretch (basic residues) spans 50–59 (AAAVKRHAKK). The tract at residues 50–71 (AAAVKRHAKKVQREQRRAVRLY) is disordered. A compositionally biased stretch (basic and acidic residues) spans 60–71 (VQREQRRAVRLY).

It belongs to the bacterial ribosomal protein bS21 family.

This chain is Small ribosomal subunit protein bS21, found in Pseudomonas fluorescens (strain ATCC BAA-477 / NRRL B-23932 / Pf-5).